The chain runs to 871 residues: MQPSNPNQFTEKAWAAIARTPDLAKQAQHQNLESEHLMKSLLEQEGLATQIFQKAGCSVQRIRDLTDEFISRQPKISHPSGVYLGQSLDKLLDRAEEARKQFGDEFISIEHLVLAFAQDDRFGKKLFQDIGLSEKVLREAIQQIRGSQKVTDQNPEGKYAALEKYGRDLTLLARQGKLDPVIGRDDEIRRVIQILSRRTKNNPVLIGEPGVGKTAIAEGLAQRIVARDVPDSLRDRQLIALDMGALIAGAKYRGEFEERLKAVLKEVTDSNGQIILFIDEIHTVVGAGATQGAMDAGNLLKPMLARGELRCIGATTLDEYRKYIEKDAALERRFQQVYVDQPSVEDTISILRGLKERYEIHHGVKISDTALVAAATLSARYISDRFLPDKAIDLVDEAAAKLKMEITSKPEELDEIDRKILQLEMERLSLQKETSAASRDRLEKLERELADLKEEQSRLNAQWQAEKEVIDRLQSIKEEIEKVNIEIQQAERNYDLNRAAELKYGKLTELHKKLAEAEAKLREIQVGGRSLLRDEVTEADIAEIISKWTGIPVSKLVESEAQKLLHLEEELHKRVVGQDEAVSAVAEAIQRSRAGLADPNRPIASFIFLGPTGVGKTELAKALAAFMFDTEEALVRIDMSEYMEKHAVSRLIGAPPGYVGYDEGGQLTEAIRRRPYAVVLFDEIEKAHPDVFNVFLQILDDGRVTDSQGRTVDFKNTIIIMTSNIGSQYILDVAGDDSRYSEMYNRVMEAMRAHFRPEFLNRVDEFIIFHSLRKDQLRQIVQLQVQRLQQRLSDRHITLSLTEKAIDFLAEVGYDPVYGARPLKRAIQKQLETPIAKAILRGDFFDGDTILVDVGEDERLSFRRQVELATV.

The Clp R domain occupies 6 to 147 (PNQFTEKAWA…REAIQQIRGS (142 aa)). Repeat stretches follow at residues 9–73 (FTEK…ISRQ) and 84–147 (LGQS…IRGS). The NBD1 stretch occupies residues 160 to 341 (AALEKYGRDL…RRFQQVYVDQ (182 aa)). ATP is bound at residue 207 to 214 (GEPGVGKT). Residues 342-550 (PSVEDTISIL…IAEIISKWTG (209 aa)) are linker. A coiled-coil region spans residues 392-526 (IDLVDEAAAK…AEAKLREIQV (135 aa)). Positions 560 to 771 (EAQKLLHLEE…RVDEFIIFHS (212 aa)) are NBD2. 610–617 (GPTGVGKT) is an ATP binding site. The tract at residues 772-871 (LRKDQLRQIV…FRRQVELATV (100 aa)) is C-terminal.

The protein belongs to the ClpA/ClpB family. As to quaternary structure, homohexamer. The oligomerization is ATP-dependent.

It is found in the cytoplasm. Part of a stress-induced multi-chaperone system, it is involved in the recovery of the cell from heat-induced damage, in cooperation with DnaK, DnaJ and GrpE. Acts before DnaK, in the processing of protein aggregates. Protein binding stimulates the ATPase activity; ATP hydrolysis unfolds the denatured protein aggregates, which probably helps expose new hydrophobic binding sites on the surface of ClpB-bound aggregates, contributing to the solubilization and refolding of denatured protein aggregates by DnaK. The protein is Chaperone protein ClpB 1 (clpB1) of Thermosynechococcus vestitus (strain NIES-2133 / IAM M-273 / BP-1).